The primary structure comprises 375 residues: uncharacterized protein (375 aa).

Over residues 1 to 12 (MAGNKKQVKKNT) the composition is skewed to basic residues. Disordered stretches follow at residues 1-76 (MAGN…EKKS) and 119-274 (KNKN…KEIK). A compositionally biased stretch (polar residues) spans 26-39 (DTSNLDTAVQTSAS). A compositionally biased stretch (low complexity) spans 129-141 (TATDGTTTTTNIP). The span at 175–185 (DETHSHKEEPK) shows a compositional bias: basic and acidic residues. Composition is skewed to low complexity over residues 198-212 (SKQQ…SSSS) and 225-241 (PTPT…KSTP). The span at 256-274 (EQPKEKSSPAPVKKEKEIK) shows a compositional bias: basic and acidic residues. 2 helical membrane passes run 299 to 319 (VVYK…LVPL) and 327 to 347 (IYSY…TLFI). The interval 355 to 375 (ASKEQKSKSGNKKSTTRKVKA) is disordered. Basic residues predominate over residues 363–375 (SGNKKSTTRKVKA).

Its subcellular location is the membrane. This is an uncharacterized protein from Dictyostelium discoideum (Social amoeba).